The chain runs to 519 residues: Sorting nexin-2 (519 aa).

A disordered region spans residues 1–104 (MAAEREPPPL…EPSPAVTPVT (104 aa)). Low complexity-rich tracts occupy residues 27 to 50 (LFTS…LPAE) and 93 to 104 (SSEPSPAVTPVT). Serine 97 carries the phosphoserine modification. Phosphothreonine occurs at positions 101 and 104. 2 positions are modified to phosphoserine: serine 117 and serine 119. The PX domain occupies 140–269 (FDIEIGVSDP…QFLESSELPR (130 aa)). Arginine 183, serine 185, lysine 211, and arginine 235 together coordinate a 1,2-diacyl-sn-glycero-3-phospho-(1D-myo-inositol-3-phosphate). At serine 185 the chain carries Phosphoserine. Residues 260–519 (QFLESSELPR…AFLPEAKAIA (260 aa)) form an interaction with RhoG region. The residue at position 277 (serine 277) is a Phosphoserine. A membrane-binding amphipathic helix region spans residues 278–295 (GAGILRMVNKAADAVNKM). In terms of domain architecture, BAR spans 299–519 (MNESDAWFEE…AFLPEAKAIA (221 aa)). Position 469 is an N6-acetyllysine (lysine 469).

This sequence belongs to the sorting nexin family. In terms of assembly, predominantly forms heterodimers with BAR domain-containing sorting nexins SNX5, SNX6 and SNX32; can self-associate to form homodimers. The heterodimers are proposed to self-assemble into helical arrays on the membrane to stabilize and expand local membrane curvature underlying endosomal tubule formation. Thought to be a component of the originally described retromer complex (also called SNX-BAR retromer) which is a pentamer containing the heterotrimeric retromer cargo-selective complex (CSC), also described as vacuolar protein sorting subcomplex (VPS), and a heterodimeric membrane-deforming subcomplex formed between SNX1 or SNX2 and SNX5 or SNX6 (also called SNX-BAR subcomplex); the respective CSC and SNX-BAR subcomplexes associate with low affinity. Interacts with SNX5, SNX6, SNX32, VPS26A, VPS29, VPS35, FNBP1, KALRN, RHOG (GDP-bound form).

It is found in the early endosome membrane. Its subcellular location is the cell projection. The protein resides in the lamellipodium. Involved in several stages of intracellular trafficking. Interacts with membranes containing phosphatidylinositol 3-phosphate (PtdIns(3P)) or phosphatidylinositol 3,5-bisphosphate (PtdIns(3,5)P2). Acts in part as component of the retromer membrane-deforming SNX-BAR subcomplex. The SNX-BAR retromer mediates retrograde transport of cargo proteins from endosomes to the trans-Golgi network (TGN) and is involved in endosome-to-plasma membrane transport for cargo protein recycling. The SNX-BAR subcomplex functions to deform the donor membrane into a tubular profile called endosome-to-TGN transport carrier (ETC). Can sense membrane curvature and has in vitro vesicle-to-membrane remodeling activity. Required for retrograde endosome-to-TGN transport of TGN38. Promotes KALRN- and RHOG-dependent but retromer-independent membrane remodeling such as lamellipodium formation; the function is dependent on GEF activity of KALRN. The protein is Sorting nexin-2 (SNX2) of Homo sapiens (Human).